The sequence spans 254 residues: PAXIP1-associated glutamate-rich protein 1 (254 aa).

Disordered regions lie at residues 1 to 111 and 127 to 254; these read MSLA…PPSE and LQAE…QRKY. A compositionally biased stretch (basic and acidic residues) spans 45–62; the sequence is KAEDEGEGGREETEREGS. Positions 78-98 are enriched in acidic residues; that stretch reads EPAEEDSEDWCVPCSDEEVEL. The tract at residues 116–160 is sufficient for interaction with NCOA1; that stretch reads YELLAAHGTLELQAEILPRRPPTPEAQSEEERSDEEPEAKEEEEE. Residue Thr138 is modified to Phosphothreonine. Over residues 142 to 159 the composition is skewed to acidic residues; that stretch reads QSEEERSDEEPEAKEEEE. Phosphoserine is present on residues Ser143 and Ser148. The segment at 161–254 is sufficient for interaction with ESR1; that stretch reads KPHMPTEFDF…SSLFPRQRKY (94 aa). Residues 195 to 223 are compositionally biased toward basic and acidic residues; that stretch reads QKREARLDKVLSDMKRHKKLEEQILRTGR. Position 237 is a phosphoserine (Ser237).

In terms of assembly, component of the KMT2 family MLL2/MLL3 complex (also named ASCOM complex), at least composed of the HMTs KMT2D and/or KMT2C, the common subunits ASH2L, RBBP5, WDR5 and DPY30, and the complex type-specific subunits PAXIP1/PTIP, PAGR1, NCOA6 and KDM6A; PAXIP1 is required for the association with the MLL2/MLL3 complex. Forms a constitutive complex with PAXIP1/PTIP independently of the MLL2/MLL3 complex. Interacts with NCOA1, ESR1, NR3C1, AR. As to expression, ubiquitously expressed.

It localises to the nucleus. In terms of biological role, its association with the histone methyltransferase MLL2/MLL3 complex is suggesting a role in epigenetic transcriptional activation. However, in association with PAXIP1/PTIP is proposed to function at least in part independently of the MLL2/MLL3 complex. Proposed to be recruited by PAXIP1 to sites of DNA damage where the PAGR1:PAXIP1 complex is required for cell survival in response to DNA damage independently of the MLL2/MLL3 complex. However, its function in DNA damage has been questioned. During immunoglobulin class switching in activated B-cells is involved in transcription regulation of downstream switch regions at the immunoglobulin heavy-chain (Igh) locus independently of the MLL2/MLL3 complex. Involved in both estrogen receptor-regulated gene transcription and estrogen-stimulated G1/S cell-cycle transition. Acts as a transcriptional cofactor for nuclear hormone receptors. Inhibits the induction properties of several steroid receptors such as NR3C1, AR and PPARG; the mechanism of inhibition appears to be gene-dependent. The polypeptide is PAXIP1-associated glutamate-rich protein 1 (PAGR1) (Homo sapiens (Human)).